Consider the following 235-residue polypeptide: Fibrillarin-like rRNA/tRNA 2'-O-methyltransferase (235 aa).

S-adenosyl-L-methionine contacts are provided by residues 91–92 (TT), 110–111 (EF), 137–138 (DA), and 157–160 (DVAQ).

Belongs to the methyltransferase superfamily. Fibrillarin family. Interacts with nop5. Component of box C/D small ribonucleoprotein (sRNP) particles that contain rpl7ae, FlpA and nop5, plus a guide RNA.

In terms of biological role, involved in pre-rRNA and tRNA processing. Utilizes the methyl donor S-adenosyl-L-methionine to catalyze the site-specific 2'-hydroxyl methylation of ribose moieties in rRNA and tRNA. Site specificity is provided by a guide RNA that base pairs with the substrate. Methylation occurs at a characteristic distance from the sequence involved in base pairing with the guide RNA. The protein is Fibrillarin-like rRNA/tRNA 2'-O-methyltransferase of Pyrobaculum islandicum (strain DSM 4184 / JCM 9189 / GEO3).